The primary structure comprises 1045 residues: Probable sucrose-phosphate synthase (1045 aa).

Composition is skewed to basic and acidic residues over residues 93–115 (ENEE…REAT) and 124–137 (EGEK…DSTR). 3 disordered regions span residues 93 to 141 (ENEE…PRLP), 222 to 243 (WSYG…DDDD), and 662 to 692 (IASS…SDSL). The segment covering 664–674 (SSRQRQPQWQR) has biased composition (low complexity).

The protein belongs to the glycosyltransferase 1 family. In terms of assembly, homodimer or homotetramer. In terms of tissue distribution, predominantly active in tap root.

The catalysed reaction is beta-D-fructose 6-phosphate + UDP-alpha-D-glucose = sucrose 6(F)-phosphate + UDP + H(+). The protein operates within glycan biosynthesis; sucrose biosynthesis; sucrose from D-fructose 6-phosphate and UDP-alpha-D-glucose: step 1/2. Activity is regulated by phosphorylation and moderated by concentration of metabolites and light. Plays a role in photosynthetic sucrose synthesis by catalyzing the rate-limiting step of sucrose biosynthesis from UDP-glucose and fructose- 6-phosphate. Involved in the regulation of carbon partitioning in the leaves of plants. May regulate the synthesis of sucrose and therefore play a major role as a limiting factor in the export of photoassimilates out of the leaf. Plays a role for sucrose availability that is essential for plant growth and fiber elongation. This is Probable sucrose-phosphate synthase (SPS) from Beta vulgaris (Sugar beet).